Reading from the N-terminus, the 120-residue chain is Large ribosomal subunit protein uL18 (120 aa).

It belongs to the universal ribosomal protein uL18 family. As to quaternary structure, part of the 50S ribosomal subunit; part of the 5S rRNA/L5/L18/L25 subcomplex. Contacts the 5S and 23S rRNAs.

Its function is as follows. This is one of the proteins that bind and probably mediate the attachment of the 5S RNA into the large ribosomal subunit, where it forms part of the central protuberance. The sequence is that of Large ribosomal subunit protein uL18 from Methylorubrum extorquens (strain CM4 / NCIMB 13688) (Methylobacterium extorquens).